A 189-amino-acid chain; its full sequence is MQAFKKLTSSAIPLWLSDIDTDMIIPANFLTQTTKDGYGKSLFHNLKEKDSSFIFNNPDYSNSEILIAGDNFGCGSSREHAVWALTQAGIKVIIAPSFSDIFFNNAAKNGLLLISLDKDTVKELCDKAEDPKFSMTVDLQEQTVNVDGSIYSFDYDPFRKDCLIRGLDDMTYLIEHLDIIKQFEQSQRG.

This sequence belongs to the LeuD family. LeuD type 1 subfamily. In terms of assembly, heterodimer of LeuC and LeuD.

The enzyme catalyses (2R,3S)-3-isopropylmalate = (2S)-2-isopropylmalate. It participates in amino-acid biosynthesis; L-leucine biosynthesis; L-leucine from 3-methyl-2-oxobutanoate: step 2/4. Catalyzes the isomerization between 2-isopropylmalate and 3-isopropylmalate, via the formation of 2-isopropylmaleate. In Francisella philomiragia subsp. philomiragia (strain ATCC 25017 / CCUG 19701 / FSC 153 / O#319-036), this protein is 3-isopropylmalate dehydratase small subunit.